We begin with the raw amino-acid sequence, 196 residues long: Endoribonuclease YbeY (196 aa).

Zn(2+)-binding residues include His120, His124, and His130.

Belongs to the endoribonuclease YbeY family. Zn(2+) is required as a cofactor.

Its subcellular location is the cytoplasm. Functionally, single strand-specific metallo-endoribonuclease involved in late-stage 70S ribosome quality control and in maturation of the 3' terminus of the 16S rRNA. In Corynebacterium diphtheriae (strain ATCC 700971 / NCTC 13129 / Biotype gravis), this protein is Endoribonuclease YbeY.